Reading from the N-terminus, the 418-residue chain is Arginine deiminase (418 aa).

Residue Cys406 is the Amidino-cysteine intermediate of the active site.

It belongs to the arginine deiminase family.

It is found in the cytoplasm. The catalysed reaction is L-arginine + H2O = L-citrulline + NH4(+). It functions in the pathway amino-acid degradation; L-arginine degradation via ADI pathway; carbamoyl phosphate from L-arginine: step 1/2. In Lentilactobacillus hilgardii (Lactobacillus hilgardii), this protein is Arginine deiminase.